Consider the following 501-residue polypeptide: Cytochrome P450 monooxygenase ccsG (501 aa).

The N-terminal stretch at 1-28 is a signal peptide; the sequence is MMITLFTLAVVSIGFFLWWLLTVQPAVT. N-linked (GlcNAc...) asparagine glycosylation is found at N115 and N154. C443 contacts heme.

The protein belongs to the cytochrome P450 family. It depends on heme as a cofactor.

The protein operates within mycotoxin biosynthesis. Its function is as follows. Cytochrome P450 monooxygenase; part of the gene cluster that mediates the biosynthesis of a family of the mycotoxins cytochalasins E and K. The hybrid PKS-NRPS synthetase ccsA and the enoyl reductase ccsC are responsible for fusion of phenylalanine with an octaketide backbone and subsequent release of the stable tetramic acid precursor. The polyketide synthase module (PKS) of the PKS-NRPS ccsA is responsible for the synthesis of the octaketide backbone. The downstream nonribosomal peptide synthetase (NRPS) amidates the carboxyl end of the octaketide with a phenylalanine. A reductase-like domain (R) at the C-terminus catalyzes the reductive release of the polyketide-amino acid intermediate. Because ccsA lacks a designated enoylreductase (ER) domain, the required activity is provided the enoyl reductase ccsC. Upon formation of the 11-membered carbocycle-fused perhydroisoindolone intermediate, a number of oxidative steps are required to afford the final cytochalasin E and K, including two hydroxylations at C17 and C18, one alcohol oxidation at C17, one epoxidation at C6 and C7 and two Baeyer-Villiger oxidations. The oxidative modification at C17, C18 and the C6-C7 epoxidation are likely to be catalyzed by the two cytochrome P450 oxygenases ccsD and ccsG. CcsD may be responsible for the epoxidation of the C6-C7 double bond. CcsG may be responsible for the successive oxidative modifications at C17 and C18. The double Baeyer-Villiger oxidations of ketocytochalasin to precytochalasin and cytochalasin Z(16) are among the final steps leading to cytochalasin E and K and are catalyzed by ccsB. The first oxygen insertion step follows that of the classic BVMO mechanism, generating the ester precytochalasin. Release of precytochalasin into an aqueous environment can generate the shunt product iso-precytochalasin through spontaneous isomerization. Alternatively, precytochalasin can undergo further oxidation by ccsB to yield the in-line carbonate-containing cytochalasin Z(16). Cytochalasin Z(16) is a precursor to cytochalasin E and cytochalasin K, whereas iso-precytochalasin is a precursor to cytochalasin Z(17) and rosellichalasin. The hydrolyase ccsE may catalyze hydrolysis of epoxide bond in cytochalasin E to afford cytochalasin K. The function of ccsF has not been assigned but it may play a role in post-PKS-NRPS biosynthetic step, resistance or transport of cytochalasins and related PKS-NRPS products. This chain is Cytochrome P450 monooxygenase ccsG, found in Aspergillus clavatus (strain ATCC 1007 / CBS 513.65 / DSM 816 / NCTC 3887 / NRRL 1 / QM 1276 / 107).